We begin with the raw amino-acid sequence, 273 residues long: Putative phosphoenolpyruvate synthase regulatory protein (273 aa).

153–160 (AVSRAGKT) is a binding site for ADP.

The protein belongs to the pyruvate, phosphate/water dikinase regulatory protein family. PSRP subfamily.

The catalysed reaction is [pyruvate, water dikinase] + ADP = [pyruvate, water dikinase]-phosphate + AMP + H(+). It catalyses the reaction [pyruvate, water dikinase]-phosphate + phosphate + H(+) = [pyruvate, water dikinase] + diphosphate. Functionally, bifunctional serine/threonine kinase and phosphorylase involved in the regulation of the phosphoenolpyruvate synthase (PEPS) by catalyzing its phosphorylation/dephosphorylation. In Xylella fastidiosa (strain 9a5c), this protein is Putative phosphoenolpyruvate synthase regulatory protein.